The chain runs to 171 residues: Probable deoxyuridine 5'-triphosphate nucleotidohydrolase (171 aa).

It belongs to the dCTP deaminase family. Archaeal dUTPase subfamily.

It catalyses the reaction dUTP + H2O = dUMP + diphosphate + H(+). It functions in the pathway pyrimidine metabolism; dUMP biosynthesis; dUMP from dCTP (dUTP route): step 2/2. This enzyme is involved in nucleotide metabolism: it produces dUMP, the immediate precursor of thymidine nucleotides and it decreases the intracellular concentration of dUTP so that uracil cannot be incorporated into DNA. The sequence is that of Probable deoxyuridine 5'-triphosphate nucleotidohydrolase from Methanosarcina barkeri (strain Fusaro / DSM 804).